Reading from the N-terminus, the 728-residue chain is Lutropin-choriogonadotropic hormone receptor (728 aa).

Residues M1–G19 form the signal peptide. The Extracellular portion of the chain corresponds to G20–V389. 6 LRR repeats span residues L92 to N116, L117 to S142, A144 to G166, S168 to G191, K193 to G215, and A216 to A239. Residues L390 to I410 form a helical membrane-spanning segment. Topologically, residues T411–R420 are cytoplasmic. The helical transmembrane segment at F421–A441 threads the bilayer. The Extracellular segment spans residues S442–T466. C464 and C539 form a disulfide bridge. A helical membrane pass occupies residues A467 to I487. Topologically, residues E488–H507 are cytoplasmic. Residues A508–L528 form a helical membrane-spanning segment. Over G529–A551 the chain is Extracellular. The chain crosses the membrane as a helical span at residues Y552–I572. At K573–R595 the chain is on the cytoplasmic side. Residues M596–S616 form a helical membrane-spanning segment. Residues A617–K630 are Extracellular-facing. The helical transmembrane segment at I631–F651 threads the bilayer. Residues T652–Q728 lie on the Cytoplasmic side of the membrane.

Belongs to the G-protein coupled receptor 1 family. FSH/LSH/TSH subfamily. Expressed in ovarian follicle granulosa cells. Expressed in ovarian follicle theca cells.

It localises to the cell membrane. Functionally, receptor for lutropin-choriogonadotropic hormone. The activity of this receptor is mediated by G proteins which activate adenylate cyclase. The chain is Lutropin-choriogonadotropic hormone receptor from Gallus gallus (Chicken).